A 152-amino-acid polypeptide reads, in one-letter code: Large ribosomal subunit protein uL15 (152 aa).

The interval 1 to 55 (MRLHELKPNEGATHKKKRVGRGIGSGHGKTSTKGQKGQTSRSGDSKLPARFEGGQ) is disordered. Over residues 28–42 (GKTSTKGQKGQTSRS) the composition is skewed to polar residues.

The protein belongs to the universal ribosomal protein uL15 family. In terms of assembly, part of the 50S ribosomal subunit.

Binds to the 23S rRNA. The polypeptide is Large ribosomal subunit protein uL15 (Sulfurihydrogenibium sp. (strain YO3AOP1)).